The chain runs to 235 residues: Large ribosomal subunit protein uL1 (235 aa).

The protein belongs to the universal ribosomal protein uL1 family. As to quaternary structure, part of the 50S ribosomal subunit.

Its function is as follows. Binds directly to 23S rRNA. The L1 stalk is quite mobile in the ribosome, and is involved in E site tRNA release. In terms of biological role, protein L1 is also a translational repressor protein, it controls the translation of the L11 operon by binding to its mRNA. The sequence is that of Large ribosomal subunit protein uL1 from Prochlorococcus marinus subsp. pastoris (strain CCMP1986 / NIES-2087 / MED4).